A 669-amino-acid chain; its full sequence is UvrABC system protein B (669 aa).

Positions 27 to 414 (ESLQGEHKFQ…EARVIEQVIR (388 aa)) constitute a Helicase ATP-binding domain. 40-47 (GATGTGKT) is an ATP binding site. The short motif at 93-116 (YYDYYQPEAYIPVTDTYIEKTASI) is the Beta-hairpin element. The 167-residue stretch at 431–597 (QVDDLYGEIQ…PINKRANNAI (167 aa)) folds into the Helicase C-terminal domain. The 36-residue stretch at 628–663 (PDLIQQLEEKMQEAAKKQEFEVAAIYRDRIQHLRDR) folds into the UVR domain.

This sequence belongs to the UvrB family. As to quaternary structure, forms a heterotetramer with UvrA during the search for lesions. Interacts with UvrC in an incision complex.

It localises to the cytoplasm. Functionally, the UvrABC repair system catalyzes the recognition and processing of DNA lesions. A damage recognition complex composed of 2 UvrA and 2 UvrB subunits scans DNA for abnormalities. Upon binding of the UvrA(2)B(2) complex to a putative damaged site, the DNA wraps around one UvrB monomer. DNA wrap is dependent on ATP binding by UvrB and probably causes local melting of the DNA helix, facilitating insertion of UvrB beta-hairpin between the DNA strands. Then UvrB probes one DNA strand for the presence of a lesion. If a lesion is found the UvrA subunits dissociate and the UvrB-DNA preincision complex is formed. This complex is subsequently bound by UvrC and the second UvrB is released. If no lesion is found, the DNA wraps around the other UvrB subunit that will check the other stand for damage. This is UvrABC system protein B from Synechocystis sp. (strain ATCC 27184 / PCC 6803 / Kazusa).